Here is a 164-residue protein sequence, read N- to C-terminus: Putative 4-hydroxy-4-methyl-2-oxoglutarate aldolase (164 aa).

Residues 80-83 (GGNL) and R102 contribute to the substrate site. D103 contacts a divalent metal cation.

This sequence belongs to the class II aldolase/RraA-like family. Homotrimer. It depends on a divalent metal cation as a cofactor.

It carries out the reaction 4-hydroxy-4-methyl-2-oxoglutarate = 2 pyruvate. It catalyses the reaction oxaloacetate + H(+) = pyruvate + CO2. Catalyzes the aldol cleavage of 4-hydroxy-4-methyl-2-oxoglutarate (HMG) into 2 molecules of pyruvate. Also contains a secondary oxaloacetate (OAA) decarboxylase activity due to the common pyruvate enolate transition state formed following C-C bond cleavage in the retro-aldol and decarboxylation reactions. The polypeptide is Putative 4-hydroxy-4-methyl-2-oxoglutarate aldolase (Paraburkholderia phymatum (strain DSM 17167 / CIP 108236 / LMG 21445 / STM815) (Burkholderia phymatum)).